A 469-amino-acid polypeptide reads, in one-letter code: Adenosylhomocysteinase (469 aa).

Positions 63, 139, and 164 each coordinate substrate. 165–167 lines the NAD(+) pocket; that stretch reads TTT. The substrate site is built by Lys194 and Asp198. NAD(+) is bound by residues Asn199, 228-233, Glu251, Asn300, 321-323, and Asn375; these read GYGDVG and IGH.

This sequence belongs to the adenosylhomocysteinase family. NAD(+) serves as cofactor.

The protein resides in the cytoplasm. It catalyses the reaction S-adenosyl-L-homocysteine + H2O = L-homocysteine + adenosine. It participates in amino-acid biosynthesis; L-homocysteine biosynthesis; L-homocysteine from S-adenosyl-L-homocysteine: step 1/1. May play a key role in the regulation of the intracellular concentration of adenosylhomocysteine. This is Adenosylhomocysteinase from Pseudomonas aeruginosa (strain LESB58).